A 783-amino-acid chain; its full sequence is Aconitate hydratase, mitochondrial (783 aa).

The N-terminal 25 residues, 1–25, are a transit peptide targeting the mitochondrion; sequence MITTRLARMGALAPKSRLLFGTRGM. Substrate is bound by residues Q102 and 195–197; that span reads DSH. Positions 388, 451, and 454 each coordinate [4Fe-4S] cluster. Substrate is bound by residues R477 and R482. The tract at residues 524 to 555 is disordered; the sequence is EFKLKAPTGDGLPSRGYDPGRDTYQAPPTDRS. Substrate is bound by residues R610 and 673-674; that span reads SR.

Belongs to the aconitase/IPM isomerase family. [4Fe-4S] cluster is required as a cofactor.

It localises to the mitochondrion. It carries out the reaction citrate = D-threo-isocitrate. The enzyme catalyses (2R)-homocitrate = cis-homoaconitate + H2O. It functions in the pathway carbohydrate metabolism; tricarboxylic acid cycle; isocitrate from oxaloacetate: step 2/2. It participates in amino-acid biosynthesis; L-lysine biosynthesis via AAA pathway; L-alpha-aminoadipate from 2-oxoglutarate: step 2/5. Functionally, catalyzes the isomerization of citrate to isocitrate via cis-aconitate, a step in the citric acid cycle. Also catalyzes the reversible dehydration of (R)-homocitrate to cis-homoaconitate, a step in the alpha-aminoadipate pathway for lysine biosynthesis. In Emericella nidulans (strain FGSC A4 / ATCC 38163 / CBS 112.46 / NRRL 194 / M139) (Aspergillus nidulans), this protein is Aconitate hydratase, mitochondrial (acoA).